We begin with the raw amino-acid sequence, 345 residues long: Phosphoribosylformylglycinamidine cyclo-ligase (345 aa).

Belongs to the AIR synthase family.

It localises to the cytoplasm. The catalysed reaction is 2-formamido-N(1)-(5-O-phospho-beta-D-ribosyl)acetamidine + ATP = 5-amino-1-(5-phospho-beta-D-ribosyl)imidazole + ADP + phosphate + H(+). It functions in the pathway purine metabolism; IMP biosynthesis via de novo pathway; 5-amino-1-(5-phospho-D-ribosyl)imidazole from N(2)-formyl-N(1)-(5-phospho-D-ribosyl)glycinamide: step 2/2. This is Phosphoribosylformylglycinamidine cyclo-ligase from Aeromonas salmonicida (strain A449).